The sequence spans 612 residues: E3 ubiquitin-protein ligase synoviolin (612 aa).

Residues 1–4 lie on the Cytoplasmic side of the membrane; it reads MFRT. The involved in FAM8A1 interaction stretch occupies residues 1–251; the sequence is MFRTAVMMAA…LFAIRPMYLA (251 aa). A helical membrane pass occupies residues 5–25; that stretch reads AVMMAASLALTGAVVAHAYYL. The segment at 21 to 42 is interaction with SEL1L; the sequence is HAYYLKHQFYPTVVYLTKSSPS. Residues 26–41 lie on the Lumenal side of the membrane; it reads KHQFYPTVVYLTKSSP. A helical transmembrane segment spans residues 42–62; the sequence is SMAVLYIQAFVLVFLLGKVMG. The Cytoplasmic segment spans residues 63–98; the sequence is KVFFGQLRAAEMEHLLERSWYAVTETCLAFTVFRDD. The helical transmembrane segment at 99–119 threads the bilayer; it reads FSPRFVALFTLLLFLKCFHWL. Over 120–140 the chain is Lumenal; that stretch reads AEDRVDFMERSPNISWLFHCR. A helical transmembrane segment spans residues 141-161; the sequence is IVSLMFLLGILDFLFVSHAYH. Topologically, residues 162–169 are cytoplasmic; sequence SILTRGAS. A helical transmembrane segment spans residues 170–190; that stretch reads VQLVFGFEYAILMTMVLTIFI. The Lumenal segment spans residues 191-224; that stretch reads KYVLHSVDLQSENPWDNKAVYMLYTELFTGFIKV. A helical transmembrane segment spans residues 225-245; it reads LLYMAFMTIMIKVHTFPLFAI. Residues 236–270 are interaction with p53/TP53; the sequence is KVHTFPLFAIRPMYLAMRQFKKAVTDAIMSRRAIR. The Cytoplasmic segment spans residues 246–612; the sequence is RPMYLAMRQF…LQKLESPVAH (367 aa). Residues Cys291, Cys294, Cys307, His309, His312, Cys315, Cys326, and Cys329 each coordinate Zn(2+). An RING-type; atypical zinc finger spans residues 291–330; that stretch reads CIICREEMVTGAKRLPCNHIFHTSCLRSWFQRQQTCPTCR. Disordered stretches follow at residues 337-375 and 393-449; these read SLPA…GLLP and PVPP…PGFP. 2 stretches are compositionally biased toward pro residues: residues 341-375 and 393-409; these read QSPP…GLLP and PVPP…PPPT. The segment covering 416–434 has biased composition (low complexity); sequence PSGAATTTAAGTSTSAPAP. A compositionally biased stretch (pro residues) spans 435-449; that stretch reads GSVPGPEAGPAPGFP. The tract at residues 474–529 is HAF-H domain; necessary to form higher-order Hrd1 complexes; that stretch reads GFAGLTPEELRALEGHERQHLEARLQSLRNIHTLLDAAMLQINQYLTVLASLGPPR. The segment at 530 to 612 is disordered; the sequence is PATSVNPTEE…LQKLESPVAH (83 aa). Residues 539–559 are compositionally biased toward low complexity; the sequence is ETASTVVSAAPSTSAPSSEAP. Residues 560 to 570 are compositionally biased toward pro residues; sequence TPSPGASPPIP. Residues 586 to 595 show a composition bias toward acidic residues; sequence ELPEDGEPDA. Ser608 carries the post-translational modification Phosphoserine.

Belongs to the HRD1 family. Homodimer. Interacts with p53/TP53. Interacts with HTT. Component of the HRD1 complex, which comprises at least SYNV1/HRD1, DERL1/2, FAM8A1, HERPUD1/HERP, OS9, SEL1L and UBE2J1. FAM8A1 is stabilized by interaction with SYNV1, which prevents its proteasomal degradation. OS9 and UBE2J1 recruitment to the complex may be mediated by SEL1L. SYNV1 assembles with SEL1L and FAM8A1 through its transmembrane domains, but interaction with its cytoplasmic domain is required to confer stability to FAM8A1 and enhance recruitment of HERPUD1. The HRD1 complex also associates with VIMP and may transfer misfolded proteins from the endoplasmic reticulum to VCP. May form a complex with ERLEC1; HSPA5; OS9 and SEL1L. Interacts with VCP. Interacts with UBXN6. Interacts with BAG6. Interacts with NFE2L1. Interacts (via N-terminus) with components of the pre-B cell receptor, including IGLL1 and VPREB1A. Interacts with CREB3L3; this interaction leads to CREB3L3 ubiquitination and proteasomal degradation. Auto-ubiquitinated. Deubiquitinated by USP19. Widely expressed, with highest levels in bone, spleen, lung and testis. In the brain, present in neurons but not in glial cells. Up-regulated in synovial tissues from mice with collagen-induced arthritis (at protein level). Expressed in the liver.

The protein localises to the endoplasmic reticulum membrane. The catalysed reaction is S-ubiquitinyl-[E2 ubiquitin-conjugating enzyme]-L-cysteine + [acceptor protein]-L-lysine = [E2 ubiquitin-conjugating enzyme]-L-cysteine + N(6)-ubiquitinyl-[acceptor protein]-L-lysine.. The protein operates within protein modification; protein ubiquitination. Its function is as follows. E3 ubiquitin-protein ligase which accepts ubiquitin specifically from endoplasmic reticulum-associated UBC7 E2 ligase and transfers it to substrates, promoting their degradation. Component of the endoplasmic reticulum quality control (ERQC) system also called ER-associated degradation (ERAD) involved in ubiquitin-dependent degradation of misfolded endoplasmic reticulum proteins. Also promotes the degradation of normal but naturally short-lived proteins such as SGK. Protects cells from ER stress-induced apoptosis. Sequesters p53/TP53 in the cytoplasm and promotes its degradation, thereby negatively regulating its biological function in transcription, cell cycle regulation and apoptosis. Required for embryogenesis. Mediates the ubiquitination and subsequent degradation of cytoplasmic NFE2L1. During the early stage of B cell development, required for degradation of the pre-B cell receptor (pre-BCR) complex, hence supporting further differentiation into mature B cells. In Mus musculus (Mouse), this protein is E3 ubiquitin-protein ligase synoviolin (Syvn1).